We begin with the raw amino-acid sequence, 406 residues long: Argininosuccinate synthase (406 aa).

Ala-8 to Thr-16 serves as a coordination point for ATP. Positions 86 and 91 each coordinate L-citrulline. An ATP-binding site is contributed by Gly-116. Residues Thr-118, Asn-122, and Asp-123 each contribute to the L-aspartate site. Asn-122 provides a ligand contact to L-citrulline. Residues Arg-126, Ser-175, Ser-184, Glu-261, and Tyr-273 each coordinate L-citrulline.

This sequence belongs to the argininosuccinate synthase family. Type 1 subfamily. Homotetramer.

Its subcellular location is the cytoplasm. The catalysed reaction is L-citrulline + L-aspartate + ATP = 2-(N(omega)-L-arginino)succinate + AMP + diphosphate + H(+). Its pathway is amino-acid biosynthesis; L-arginine biosynthesis; L-arginine from L-ornithine and carbamoyl phosphate: step 2/3. This chain is Argininosuccinate synthase, found in Brachyspira hyodysenteriae (strain ATCC 49526 / WA1).